The primary structure comprises 264 residues: Thiazole synthase (264 aa).

The Schiff-base intermediate with DXP role is filled by Lys104. 1-deoxy-D-xylulose 5-phosphate-binding positions include Gly165, 191 to 192 (AG), and 213 to 214 (NT).

Belongs to the ThiG family. Homotetramer. Forms heterodimers with either ThiH or ThiS.

It localises to the cytoplasm. It carries out the reaction [ThiS sulfur-carrier protein]-C-terminal-Gly-aminoethanethioate + 2-iminoacetate + 1-deoxy-D-xylulose 5-phosphate = [ThiS sulfur-carrier protein]-C-terminal Gly-Gly + 2-[(2R,5Z)-2-carboxy-4-methylthiazol-5(2H)-ylidene]ethyl phosphate + 2 H2O + H(+). It participates in cofactor biosynthesis; thiamine diphosphate biosynthesis. Catalyzes the rearrangement of 1-deoxy-D-xylulose 5-phosphate (DXP) to produce the thiazole phosphate moiety of thiamine. Sulfur is provided by the thiocarboxylate moiety of the carrier protein ThiS. In vitro, sulfur can be provided by H(2)S. In Oleidesulfovibrio alaskensis (strain ATCC BAA-1058 / DSM 17464 / G20) (Desulfovibrio alaskensis), this protein is Thiazole synthase.